Here is a 379-residue protein sequence, read N- to C-terminus: Galactose-1-phosphate uridylyltransferase (379 aa).

Positions 1–21 (MSRSGTDPQQRQQASEADAAA) are disordered. Residues 9-21 (QQRQQASEADAAA) show a composition bias toward low complexity. Zn(2+) is bound at residue C75. UDP-alpha-D-glucose is bound by residues A81, 97-98 (ND), and N173. H184 serves as a coordination point for Zn(2+). Residue H186 is the Tele-UMP-histidine intermediate of the active site. Residue Q188 participates in UDP-alpha-D-glucose binding. Zn(2+)-binding residues include E202, H301, H319, and H321. UDP-alpha-D-glucose contacts are provided by residues 334–337 (KFMV) and 339–340 (YE).

The protein belongs to the galactose-1-phosphate uridylyltransferase type 1 family. Homodimer. Zn(2+) serves as cofactor.

The enzyme catalyses alpha-D-galactose 1-phosphate + UDP-alpha-D-glucose = alpha-D-glucose 1-phosphate + UDP-alpha-D-galactose. It functions in the pathway carbohydrate metabolism; galactose metabolism. Its function is as follows. Plays an important role in galactose metabolism. The sequence is that of Galactose-1-phosphate uridylyltransferase (GALT) from Homo sapiens (Human).